We begin with the raw amino-acid sequence, 182 residues long: Ribosome-recycling factor (182 aa).

It belongs to the RRF family.

It is found in the cytoplasm. Responsible for the release of ribosomes from messenger RNA at the termination of protein biosynthesis. May increase the efficiency of translation by recycling ribosomes from one round of translation to another. In Parasynechococcus marenigrum (strain WH8102), this protein is Ribosome-recycling factor.